A 550-amino-acid chain; its full sequence is Hydroxylamine reductase (550 aa).

[2Fe-2S] cluster is bound by residues cysteine 3, cysteine 6, cysteine 18, and cysteine 25. 8 residues coordinate hybrid [4Fe-2O-2S] cluster: histidine 249, glutamate 273, cysteine 317, cysteine 405, cysteine 433, cysteine 458, glutamate 492, and lysine 494. Cysteine 405 carries the cysteine persulfide modification.

This sequence belongs to the HCP family. It depends on [2Fe-2S] cluster as a cofactor. Hybrid [4Fe-2O-2S] cluster serves as cofactor.

It localises to the cytoplasm. The enzyme catalyses A + NH4(+) + H2O = hydroxylamine + AH2 + H(+). Functionally, catalyzes the reduction of hydroxylamine to form NH(3) and H(2)O. The sequence is that of Hydroxylamine reductase from Salmonella choleraesuis (strain SC-B67).